The primary structure comprises 481 residues: MSDPKLTKAVDSICDQFIVTKSKISQLTEYFIDCMEKGLEPCESDISQNKGLPMIPTFVTDKPSGQEHGVTMLAADLGGTNFRVCSVELLGNHEFKIEQEKSKIPTFFFQDDHHVTSKDLFQHMALITHQFLTKHHKDVIQDYKWKMGFTFSYPVDQTSLSSGKLIRWTKGFKIGDTVGQDVVQLFQQELNDIGLSNVHVVALTNDTTGTLLARCYASSDAARAINEPVIGCIFGTGTNGCYMEKLENIHKLDPASREELLSQGKTHMCINTEWGSFDNELNHLPTTSYDIKIDQQFSTNPGFHLFEKRVSGLYLGEILRNILLDLEKQELFDLKESVLKNNPFILTTETLSHIEIDTVENDLQDTRDALLKAADLETTFEERVLIQKLVRAISRRAAFLAAVPIAAILIKTNALNQSYHCQVEVGCDGSVVEHYPGFRSMMRHALALSPIGPEGERDVHLRISKDGSGVGAALCALHANY.

The Hexokinase domain occupies 4-477 (PKLTKAVDSI…SGVGAALCAL (474 aa)). A hexokinase small subdomain region spans residues 64-204 (SGQEHGVTML…LSNVHVVALT (141 aa)). An ATP-binding site is contributed by Lys101. The segment at 146–172 (KMGFTFSYPVDQTSLSSGKLIRWTKGF) is glucose-binding. Residues 205–466 (NDTTGTLLAR…RDVHLRISKD (262 aa)) are hexokinase large subdomain. 466–471 (DGSGVG) contributes to the ATP binding site.

It belongs to the hexokinase family.

It carries out the reaction D-glucose + ATP = D-glucose 6-phosphate + ADP + H(+). The catalysed reaction is a D-hexose + ATP = a D-hexose 6-phosphate + ADP + H(+). The enzyme catalyses D-mannose + ATP = D-mannose 6-phosphate + ADP + H(+). It functions in the pathway carbohydrate metabolism; hexose metabolism. It participates in carbohydrate degradation; glycolysis; D-glyceraldehyde 3-phosphate and glycerone phosphate from D-glucose: step 1/4. Glukokinase specific for aldohexoses. Phosphorylates glucose and mannose, but not fructose. The chain is Glucokinase-1 (GLK1) from Kluyveromyces lactis (strain ATCC 8585 / CBS 2359 / DSM 70799 / NBRC 1267 / NRRL Y-1140 / WM37) (Yeast).